A 521-amino-acid chain; its full sequence is Aspartic proteinase yapsin-1 (521 aa).

A signal peptide spans 1–17; the sequence is MRIWILIFFSFIKLVSS. Over 18 to 500 the chain is Extracellular; it reads LQYTGNGVLA…NAVANAGNSF (483 aa). Positions 67–409 constitute a Peptidase A1 domain; the sequence is YTTTLSIGRP…HQSQKMIAIG (343 aa). Residue Asp85 is part of the active site. Asn136, Asn157, Asn250, Asn289, Asn295, Asn354, Asn414, Asn418, Asn460, and Asn484 each carry an N-linked (GlcNAc...) asparagine glycan. A helical transmembrane segment spans residues 501 to 521; that stretch reads SPLSAMVIMMMSAVFLGLGII.

The protein belongs to the peptidase A1 family.

It is found in the endoplasmic reticulum membrane. The protein localises to the secreted. The protein resides in the cell wall. Functionally, cleaves at paired basic residues. This Schizosaccharomyces pombe (strain 972 / ATCC 24843) (Fission yeast) protein is Aspartic proteinase yapsin-1 (yps1).